A 430-amino-acid chain; its full sequence is Serine--tRNA ligase (430 aa).

Thr-237–Glu-239 contributes to the L-serine binding site. ATP is bound at residue Arg-268–Glu-270. Glu-291 serves as a coordination point for L-serine. Glu-355–Ser-358 contacts ATP. Ser-391 provides a ligand contact to L-serine.

This sequence belongs to the class-II aminoacyl-tRNA synthetase family. Type-1 seryl-tRNA synthetase subfamily. In terms of assembly, homodimer. The tRNA molecule binds across the dimer.

It is found in the cytoplasm. The catalysed reaction is tRNA(Ser) + L-serine + ATP = L-seryl-tRNA(Ser) + AMP + diphosphate + H(+). The enzyme catalyses tRNA(Sec) + L-serine + ATP = L-seryl-tRNA(Sec) + AMP + diphosphate + H(+). It participates in aminoacyl-tRNA biosynthesis; selenocysteinyl-tRNA(Sec) biosynthesis; L-seryl-tRNA(Sec) from L-serine and tRNA(Sec): step 1/1. Catalyzes the attachment of serine to tRNA(Ser). Is also able to aminoacylate tRNA(Sec) with serine, to form the misacylated tRNA L-seryl-tRNA(Sec), which will be further converted into selenocysteinyl-tRNA(Sec). The chain is Serine--tRNA ligase from Klebsiella pneumoniae subsp. pneumoniae (strain ATCC 700721 / MGH 78578).